Here is a 538-residue protein sequence, read N- to C-terminus: Probable inorganic phosphate transporter 1-4 (538 aa).

Residues 1-23 (MAGELKVLNALDSAKTQWYHFTA) lie on the Cytoplasmic side of the membrane. The chain crosses the membrane as a helical span at residues 24–44 (IVIAGMGFFTDAYDLFSISLV). The Extracellular segment spans residues 45–69 (TKLLGRIYYFNPASKSPGSLPPNVS). Residues 70 to 90 (AAVNGVAFCGTLAGQLFFGWL) traverse the membrane as a helical segment. Residues 91–98 (GDKMGRKK) are Cytoplasmic-facing. Residues 99–119 (VYGMTLMLMVICCLASGLSFG) form a helical membrane-spanning segment. The Extracellular segment spans residues 120-123 (SSAK). The chain crosses the membrane as a helical span at residues 124 to 144 (GVMATLCFFRFWLGFGIGGDY). The Cytoplasmic portion of the chain corresponds to 145-163 (PLSATIMSEYANKRTRGAF). The chain crosses the membrane as a helical span at residues 164–184 (IAAVFAMQGFGNLTGGIVAII). At 185-210 (VSAAFKSRFDAPAYRDDRTGSTVPQA) the chain is on the extracellular side. A helical transmembrane segment spans residues 211 to 231 (DYAWRIVLMFGAIPALLTYYW). Residues 232-294 (RMKMPETARY…RQFLRRHGRH (63 aa)) lie on the Cytoplasmic side of the membrane. Residues 295 to 315 (LLGTTVCWFVLDIAFYSSNLF) traverse the membrane as a helical segment. At 316-346 (QKDIYTAVQWLPKADTMSALEEMFKISRAQT) the chain is on the extracellular side. Residues 347 to 367 (LVALCGTIPGYWFTVFFIDII) traverse the membrane as a helical segment. Over 368–369 (GR) the chain is Cytoplasmic. Residues 370–390 (FVIQLGGFFFMTAFMLGLAVP) traverse the membrane as a helical segment. Residues 391-396 (YHHWTT) are Extracellular-facing. The chain crosses the membrane as a helical span at residues 397–417 (PGNHIGFVVMYAFTFFFANFG). The Cytoplasmic portion of the chain corresponds to 418–440 (PNSTTFIVPAEIFPARLRSTCHG). A helical transmembrane segment spans residues 441–461 (ISAAAGKAGAIVGSFGFLYAA). The Extracellular portion of the chain corresponds to 462-481 (QSTDASKTDAGYPPGIGVRN). Residues 482-502 (SLFFLAGCNVIGFFFTFLVPE) traverse the membrane as a helical segment. Topologically, residues 503–538 (SKGKSLEELSGENEDDDDVPEAPATADHRTAPAPPA) are cytoplasmic. A disordered region spans residues 507 to 538 (SLEELSGENEDDDDVPEAPATADHRTAPAPPA). Residues 511-522 (LSGENEDDDDVP) show a composition bias toward acidic residues.

Belongs to the major facilitator superfamily. Phosphate:H(+) symporter (TC 2.A.1.9) family. In terms of tissue distribution, expressed at low levels in roots.

It localises to the membrane. Functionally, high-affinity transporter for external inorganic phosphate. The protein is Probable inorganic phosphate transporter 1-4 (PHT1-4) of Oryza sativa subsp. japonica (Rice).